The sequence spans 492 residues: 2,3-bisphosphoglycerate-independent phosphoglycerate mutase (492 aa).

2 residues coordinate Mn(2+): aspartate 11 and serine 61. Serine 61 acts as the Phosphoserine intermediate in catalysis. Residues histidine 118, 147 to 148, arginine 177, arginine 183, 248 to 251, and lysine 321 each bind substrate; these read RD and RSDR. Mn(2+)-binding residues include aspartate 387, histidine 391, aspartate 428, histidine 429, and histidine 446.

The protein belongs to the BPG-independent phosphoglycerate mutase family. As to quaternary structure, monomer. Requires Mn(2+) as cofactor.

The enzyme catalyses (2R)-2-phosphoglycerate = (2R)-3-phosphoglycerate. The protein operates within carbohydrate degradation; glycolysis; pyruvate from D-glyceraldehyde 3-phosphate: step 3/5. Catalyzes the interconversion of 2-phosphoglycerate and 3-phosphoglycerate. The chain is 2,3-bisphosphoglycerate-independent phosphoglycerate mutase from Wolinella succinogenes (strain ATCC 29543 / DSM 1740 / CCUG 13145 / JCM 31913 / LMG 7466 / NCTC 11488 / FDC 602W) (Vibrio succinogenes).